A 244-amino-acid polypeptide reads, in one-letter code: Cell division protein ZapD (244 aa).

The protein belongs to the ZapD family. In terms of assembly, interacts with FtsZ.

The protein localises to the cytoplasm. In terms of biological role, cell division factor that enhances FtsZ-ring assembly. Directly interacts with FtsZ and promotes bundling of FtsZ protofilaments, with a reduction in FtsZ GTPase activity. This is Cell division protein ZapD from Shewanella baltica (strain OS223).